A 597-amino-acid polypeptide reads, in one-letter code: UvrABC system protein C (597 aa).

Residues 15 to 93 (NSPGVYQYFD…IKKHQPRFNV (79 aa)) form the GIY-YIG domain. Positions 207–242 (KDSLQRFRNQMKQHSEKMEFEDAQRIKNKIDVLENY) constitute a UVR domain.

This sequence belongs to the UvrC family. In terms of assembly, interacts with UvrB in an incision complex.

It is found in the cytoplasm. In terms of biological role, the UvrABC repair system catalyzes the recognition and processing of DNA lesions. UvrC both incises the 5' and 3' sides of the lesion. The N-terminal half is responsible for the 3' incision and the C-terminal half is responsible for the 5' incision. The protein is UvrABC system protein C of Christiangramia forsetii (strain DSM 17595 / CGMCC 1.15422 / KT0803) (Gramella forsetii).